The following is a 339-amino-acid chain: Holliday junction branch migration complex subunit RuvB (339 aa).

The large ATPase domain (RuvB-L) stretch occupies residues K2–Y187. ATP is bound by residues L26, R27, G68, K71, T72, T73, E134–F136, R177, Y187, and R224. Residue T72 coordinates Mg(2+). Positions S188–E258 are small ATPAse domain (RuvB-S). The tract at residues D261–K339 is head domain (RuvB-H). Residues R316 and R321 each coordinate DNA.

The protein belongs to the RuvB family. Homohexamer. Forms an RuvA(8)-RuvB(12)-Holliday junction (HJ) complex. HJ DNA is sandwiched between 2 RuvA tetramers; dsDNA enters through RuvA and exits via RuvB. An RuvB hexamer assembles on each DNA strand where it exits the tetramer. Each RuvB hexamer is contacted by two RuvA subunits (via domain III) on 2 adjacent RuvB subunits; this complex drives branch migration. In the full resolvosome a probable DNA-RuvA(4)-RuvB(12)-RuvC(2) complex forms which resolves the HJ.

It localises to the cytoplasm. The catalysed reaction is ATP + H2O = ADP + phosphate + H(+). Functionally, the RuvA-RuvB-RuvC complex processes Holliday junction (HJ) DNA during genetic recombination and DNA repair, while the RuvA-RuvB complex plays an important role in the rescue of blocked DNA replication forks via replication fork reversal (RFR). RuvA specifically binds to HJ cruciform DNA, conferring on it an open structure. The RuvB hexamer acts as an ATP-dependent pump, pulling dsDNA into and through the RuvAB complex. RuvB forms 2 homohexamers on either side of HJ DNA bound by 1 or 2 RuvA tetramers; 4 subunits per hexamer contact DNA at a time. Coordinated motions by a converter formed by DNA-disengaged RuvB subunits stimulates ATP hydrolysis and nucleotide exchange. Immobilization of the converter enables RuvB to convert the ATP-contained energy into a lever motion, pulling 2 nucleotides of DNA out of the RuvA tetramer per ATP hydrolyzed, thus driving DNA branch migration. The RuvB motors rotate together with the DNA substrate, which together with the progressing nucleotide cycle form the mechanistic basis for DNA recombination by continuous HJ branch migration. Branch migration allows RuvC to scan DNA until it finds its consensus sequence, where it cleaves and resolves cruciform DNA. The protein is Holliday junction branch migration complex subunit RuvB of Lactobacillus johnsonii (strain CNCM I-12250 / La1 / NCC 533).